The primary structure comprises 431 residues: Enolase (431 aa).

Residue Gln-167 participates in (2R)-2-phosphoglycerate binding. The active-site Proton donor is the Glu-209. Asp-246, Glu-290, and Asp-317 together coordinate Mg(2+). Residues Lys-342, Arg-371, Ser-372, and Lys-393 each contribute to the (2R)-2-phosphoglycerate site. The active-site Proton acceptor is the Lys-342.

The protein belongs to the enolase family. As to quaternary structure, component of the RNA degradosome, a multiprotein complex involved in RNA processing and mRNA degradation. It depends on Mg(2+) as a cofactor.

Its subcellular location is the cytoplasm. The protein resides in the secreted. The protein localises to the cell surface. The enzyme catalyses (2R)-2-phosphoglycerate = phosphoenolpyruvate + H2O. The protein operates within carbohydrate degradation; glycolysis; pyruvate from D-glyceraldehyde 3-phosphate: step 4/5. Its function is as follows. Catalyzes the reversible conversion of 2-phosphoglycerate (2-PG) into phosphoenolpyruvate (PEP). It is essential for the degradation of carbohydrates via glycolysis. The sequence is that of Enolase from Serratia proteamaculans (strain 568).